Consider the following 64-residue polypeptide: uncharacterized protein (64 aa).

The segment covering M1–H14 has biased composition (polar residues). The tract at residues M1 to P42 is disordered.

This is an uncharacterized protein from Dictyostelium discoideum (Social amoeba).